A 308-amino-acid chain; its full sequence is MAENPVCTAQVNIGSGSQSNSCISILGSNSINSNSVPVLFCFSVFARPSSVPHGSGYELLIQKFLSLYGDQIDMHRKFVVQLFAEEWGQYIDLPKGFIISERCKIRLVPLQIQLTTLGNLTPASTVFFCCDMQERFRPAIKYFGDIISVGQRLLQGARILGIPVIATEQYPKGLGSTVQELDLTGVKLVLPKTKFSMVLPEVEAALAETPGVRSVVLFGVETHVCIQQTALDLIGRGVEVHIVADATSSRSMMDRMFALERLARNGIIITTSEAILLQLVADKDHPKFKEIQNLIKASAPESGLLSKV.

Belongs to the isochorismatase family.

The polypeptide is Isochorismatase domain-containing protein 1 (isoc1) (Xenopus tropicalis (Western clawed frog)).